The sequence spans 131 residues: Ribosome-binding factor A (131 aa).

The protein belongs to the RbfA family. As to quaternary structure, monomer. Binds 30S ribosomal subunits, but not 50S ribosomal subunits or 70S ribosomes.

The protein resides in the cytoplasm. Functionally, one of several proteins that assist in the late maturation steps of the functional core of the 30S ribosomal subunit. Associates with free 30S ribosomal subunits (but not with 30S subunits that are part of 70S ribosomes or polysomes). Required for efficient processing of 16S rRNA. May interact with the 5'-terminal helix region of 16S rRNA. In Christiangramia forsetii (strain DSM 17595 / CGMCC 1.15422 / KT0803) (Gramella forsetii), this protein is Ribosome-binding factor A.